The primary structure comprises 134 residues: Mini-ribonuclease 3 (134 aa).

Residue aspartate 23 is part of the active site.

Belongs to the MrnC RNase family. As to quaternary structure, homodimer. Mg(2+) is required as a cofactor.

Its subcellular location is the cytoplasm. Its function is as follows. Involved in correct processing of both the 5' and 3' ends of 23S rRNA precursor. Processes 30S rRNA precursor transcript even in absence of ribonuclease 3 (Rnc); Rnc processes 30S rRNA into smaller rRNA precursors. The sequence is that of Mini-ribonuclease 3 from Brevibacillus brevis (strain 47 / JCM 6285 / NBRC 100599).